The following is a 361-amino-acid chain: MAGNTIGQLFRVTTFGESHGIALGCIVDGVPPGIPLTEEDLQHDLDRRRPGTSRYTTPRREPDRVKILSGVFEGRTTGTSIGLLIENTDQRSQDYGAIKELYRPGHADFTYDGKYGFRDYRGGGRSSARETAMRVAAGAIAKKYLDMKHGIKVRGYLAQMGDVVCELKDWQQVEQNPFFSPDVDKLDALDELMRALKKEGDSIGAKVAVMAENVPVGLGEPVFDRLDADLAHALMSINAVKGVEIGDGFAVVNQRGSEHRDEIRANGFQSNHAGGILGGISSGQTITANLAMKPTSSITVPGKTITRSGEEVEMITKGRHDPCVGIRAVPIAEAMMAIVLMDHLLRHRAQNADVHVDMPHG.

The disordered stretch occupies residues 37-59; that stretch reads TEEDLQHDLDRRRPGTSRYTTPR. The span at 40–49 shows a compositional bias: basic and acidic residues; it reads DLQHDLDRRR. Residues R48 and R54 each coordinate NADP(+). FMN-binding positions include 125–127, 238–239, G278, 293–297, and R319; these read RSS, NA, and KPTSS.

This sequence belongs to the chorismate synthase family. Homotetramer. FMNH2 is required as a cofactor.

The catalysed reaction is 5-O-(1-carboxyvinyl)-3-phosphoshikimate = chorismate + phosphate. Its pathway is metabolic intermediate biosynthesis; chorismate biosynthesis; chorismate from D-erythrose 4-phosphate and phosphoenolpyruvate: step 7/7. Catalyzes the anti-1,4-elimination of the C-3 phosphate and the C-6 proR hydrogen from 5-enolpyruvylshikimate-3-phosphate (EPSP) to yield chorismate, which is the branch point compound that serves as the starting substrate for the three terminal pathways of aromatic amino acid biosynthesis. This reaction introduces a second double bond into the aromatic ring system. The sequence is that of Chorismate synthase from Erwinia tasmaniensis (strain DSM 17950 / CFBP 7177 / CIP 109463 / NCPPB 4357 / Et1/99).